Reading from the N-terminus, the 120-residue chain is ATP-dependent Clp protease adapter protein ClpS (120 aa).

This sequence belongs to the ClpS family. In terms of assembly, binds to the N-terminal domain of the chaperone ClpA.

Its function is as follows. Involved in the modulation of the specificity of the ClpAP-mediated ATP-dependent protein degradation. This chain is ATP-dependent Clp protease adapter protein ClpS, found in Pseudomonas syringae pv. syringae (strain B728a).